We begin with the raw amino-acid sequence, 421 residues long: Imidazolonepropionase (421 aa).

H81 and H83 together coordinate Fe(3+). Zn(2+) is bound by residues H81 and H83. 4-imidazolone-5-propanoate is bound by residues R90, Y153, and H186. Position 153 (Y153) interacts with N-formimidoyl-L-glutamate. H251 contributes to the Fe(3+) binding site. H251 is a binding site for Zn(2+). E254 contacts 4-imidazolone-5-propanoate. D326 serves as a coordination point for Fe(3+). A Zn(2+)-binding site is contributed by D326. Positions 328 and 330 each coordinate N-formimidoyl-L-glutamate. Position 331 (S331) interacts with 4-imidazolone-5-propanoate.

It belongs to the metallo-dependent hydrolases superfamily. HutI family. It depends on Zn(2+) as a cofactor. Fe(3+) is required as a cofactor.

It is found in the cytoplasm. It carries out the reaction 4-imidazolone-5-propanoate + H2O = N-formimidoyl-L-glutamate. The protein operates within amino-acid degradation; L-histidine degradation into L-glutamate; N-formimidoyl-L-glutamate from L-histidine: step 3/3. Its function is as follows. Catalyzes the hydrolytic cleavage of the carbon-nitrogen bond in imidazolone-5-propanoate to yield N-formimidoyl-L-glutamate. It is the third step in the universal histidine degradation pathway. The sequence is that of Imidazolonepropionase from Streptococcus pyogenes serotype M18 (strain MGAS8232).